Consider the following 424-residue polypeptide: Protein UL117 (424 aa).

The tract at residues Ile-57–Pro-82 is disordered.

Belongs to the herpesviridae U84 family.

The protein resides in the host nucleus. Its function is as follows. Plays a role in the inhibition of host DNA replication in the infected cell. Targets the mini-chromosome maintenance (MCM) complex and blocks the accumulation of MCM proteins and their loading onto host chromatin. In Human cytomegalovirus (strain AD169) (HHV-5), this protein is Protein UL117 (UL117).